Reading from the N-terminus, the 306-residue chain is Brix domain-containing protein C4F8.04 (306 aa).

The segment at 16 to 49 is disordered; it reads KALHQKNKDKLERRKERAKEEEKDPEKKRLRLSE. Residues 21 to 42 are compositionally biased toward basic and acidic residues; sequence KNKDKLERRKERAKEEEKDPEK. The 190-residue stretch at 94 to 283 folds into the Brix domain; it reads PKLLVTTSKR…LRMVQKGVWD (190 aa).

The polypeptide is Brix domain-containing protein C4F8.04 (Schizosaccharomyces pombe (strain 972 / ATCC 24843) (Fission yeast)).